We begin with the raw amino-acid sequence, 225 residues long: Peptidyl-tRNA hydrolase (225 aa).

Tyr-14 contributes to the tRNA binding site. Catalysis depends on His-19, which acts as the Proton acceptor. The tRNA site is built by Phe-64, Asn-66, and Asn-112. The interval 184 to 225 is disordered; the sequence is ALRMQPPKPEKPKPAAKAPEAQAPEAAPDARSALQKLADRFR. Positions 198 to 210 are enriched in low complexity; sequence AAKAPEAQAPEAA.

This sequence belongs to the PTH family. As to quaternary structure, monomer.

The protein resides in the cytoplasm. It catalyses the reaction an N-acyl-L-alpha-aminoacyl-tRNA + H2O = an N-acyl-L-amino acid + a tRNA + H(+). Functionally, hydrolyzes ribosome-free peptidyl-tRNAs (with 1 or more amino acids incorporated), which drop off the ribosome during protein synthesis, or as a result of ribosome stalling. In terms of biological role, catalyzes the release of premature peptidyl moieties from peptidyl-tRNA molecules trapped in stalled 50S ribosomal subunits, and thus maintains levels of free tRNAs and 50S ribosomes. The sequence is that of Peptidyl-tRNA hydrolase from Cereibacter sphaeroides (strain KD131 / KCTC 12085) (Rhodobacter sphaeroides).